A 67-amino-acid chain; its full sequence is Moricin (67 aa).

Positions 1 to 23 (MKLTSLFIFVIVALSLLFSSTDA) are cleaved as a signal peptide.

The protein belongs to the moricin family. Monomer.

It localises to the secreted. Functionally, antimicrobial peptide. Active against a broad spectrum of Gram-positive and Gram-negative bacteria including methicillin-resistant S.aureus ATCC 43 300, S.aureus BAA-39, pathogenic strains of L.monocytogenes, K.pneumoniae, E.coli O157:H7, S.typhimurium and multidrug-resistant S.typhimurium DT104 with minimum inhibitory concentration (MIC) of 1.4 uM for all except for S.aureus BAA-39. Also active against Serratia marcescens. Probably acts by disturbing membrane functions with its amphipathic alpha-helical structure. May protect a developing embryo from bacterial infection. The protein is Moricin of Manduca sexta (Tobacco hawkmoth).